The following is a 212-amino-acid chain: Interleukin-6 (212 aa).

The signal sequence occupies residues methionine 1–proline 27. Cysteines 72 and 78 form a disulfide. An N-linked (GlcNAc...) asparagine glycan is attached at asparagine 73. Position 81 is a phosphoserine (serine 81). A disulfide bond links cysteine 101 and cysteine 111. An N-linked (GlcNAc...) asparagine glycan is attached at asparagine 172.

Belongs to the IL-6 superfamily. In terms of assembly, component of a hexamer of two molecules each of IL6, IL6R and IL6ST; first binds to IL6R to associate with the signaling subunit IL6ST. Interacts with IL6R (via the N-terminal ectodomain); this interaction may be affected by IL6R-binding with SORL1, hence decreasing IL6 cis signaling. Interacts with SORL1 (via the N-terminal ectodomain); this interaction leads to IL6 internalization and lysosomal degradation. May form a trimeric complex with the soluble SORL1 ectodomain and soluble IL6R receptor; this interaction might stabilize circulating IL6, hence promoting IL6 trans signaling.

It is found in the secreted. Functionally, cytokine with a wide variety of biological functions in immunity, tissue regeneration, and metabolism. Binds to IL6R, then the complex associates to the signaling subunit IL6ST/gp130 to trigger the intracellular IL6-signaling pathway. The interaction with the membrane-bound IL6R and IL6ST stimulates 'classic signaling', whereas the binding of IL6 and soluble IL6R to IL6ST stimulates 'trans-signaling'. Alternatively, 'cluster signaling' occurs when membrane-bound IL6:IL6R complexes on transmitter cells activate IL6ST receptors on neighboring receiver cells. In terms of biological role, IL6 is a potent inducer of the acute phase response. Rapid production of IL6 contributes to host defense during infection and tissue injury, but excessive IL6 synthesis is involved in disease pathology. In the innate immune response, is synthesized by myeloid cells, such as macrophages and dendritic cells, upon recognition of pathogens through toll-like receptors (TLRs) at the site of infection or tissue injury. In the adaptive immune response, is required for the differentiation of B cells into immunoglobulin-secreting cells. Plays a major role in the differentiation of CD4(+) T cell subsets. Essential factor for the development of T follicular helper (Tfh) cells that are required for the induction of germinal-center formation. Required to drive naive CD4(+) T cells to the Th17 lineage. Also required for proliferation of myeloma cells and the survival of plasmablast cells. Acts as an essential factor in bone homeostasis and on vessels directly or indirectly by induction of VEGF, resulting in increased angiogenesis activity and vascular permeability. Induces, through 'trans-signaling' and synergistically with IL1B and TNF, the production of VEGF. Involved in metabolic controls, is discharged into the bloodstream after muscle contraction increasing lipolysis and improving insulin resistance. 'Trans-signaling' in central nervous system also regulates energy and glucose homeostasis. Mediates, through GLP-1, crosstalk between insulin-sensitive tissues, intestinal L cells and pancreatic islets to adapt to changes in insulin demand. Also acts as a myokine. Plays a protective role during liver injury, being required for maintenance of tissue regeneration. Also has a pivotal role in iron metabolism by regulating HAMP/hepcidin expression upon inflammation or bacterial infection. Through activation of IL6ST-YAP-NOTCH pathway, induces inflammation-induced epithelial regeneration. The polypeptide is Interleukin-6 (IL6) (Macaca thibetana (Pere David's macaque)).